Here is a 217-residue protein sequence, read N- to C-terminus: ATP synthase F(0) complex subunit a (217 aa).

Helical transmembrane passes span 20–40, 70–90, 100–120, 126–146, 166–188, and 193–215; these read MNWI…WILP, PAFL…FSLF, MVFS…LSTC, MIAH…MTII, LIAG…IIFI, and MIFE…SLYS.

This sequence belongs to the ATPase A chain family. Component of the ATP synthase complex composed at least of ATP5F1A/subunit alpha, ATP5F1B/subunit beta, ATP5MC1/subunit c (homooctomer), MT-ATP6/subunit a, MT-ATP8/subunit 8, ATP5ME/subunit e, ATP5MF/subunit f, ATP5MG/subunit g, ATP5MK/subunit k, ATP5MJ/subunit j, ATP5F1C/subunit gamma, ATP5F1D/subunit delta, ATP5F1E/subunit epsilon, ATP5PF/subunit F6, ATP5PB/subunit b, ATP5PD/subunit d, ATP5PO/subunit OSCP. ATP synthase complex consists of a soluble F(1) head domain (subunits alpha(3) and beta(3)) - the catalytic core - and a membrane F(0) domain - the membrane proton channel (subunits c, a, 8, e, f, g, k and j). These two domains are linked by a central stalk (subunits gamma, delta, and epsilon) rotating inside the F1 region and a stationary peripheral stalk (subunits F6, b, d, and OSCP). Interacts with DNAJC30; interaction is direct.

It is found in the mitochondrion inner membrane. The enzyme catalyses H(+)(in) = H(+)(out). Functionally, subunit a, of the mitochondrial membrane ATP synthase complex (F(1)F(0) ATP synthase or Complex V) that produces ATP from ADP in the presence of a proton gradient across the membrane which is generated by electron transport complexes of the respiratory chain. ATP synthase complex consist of a soluble F(1) head domain - the catalytic core - and a membrane F(1) domain - the membrane proton channel. These two domains are linked by a central stalk rotating inside the F(1) region and a stationary peripheral stalk. During catalysis, ATP synthesis in the catalytic domain of F(1) is coupled via a rotary mechanism of the central stalk subunits to proton translocation. With the subunit c (ATP5MC1), forms the proton-conducting channel in the F(0) domain, that contains two crucial half-channels (inlet and outlet) that facilitate proton movement from the mitochondrial intermembrane space (IMS) into the matrix. Protons are taken up via the inlet half-channel and released through the outlet half-channel, following a Grotthuss mechanism. This is ATP synthase F(0) complex subunit a from Rhopalosiphum padi (Bird cherry-oat aphid).